The sequence spans 491 residues: Ketol-acid reductoisomerase (NADP(+)) (491 aa).

The region spanning 15-208 (AQLGKCRFMA…GGHRAGVLES (194 aa)) is the KARI N-terminal Rossmann domain. NADP(+) contacts are provided by residues 45–48 (CGAQ), Arg68, Arg76, Ser78, and 108–110 (DKQ). His132 is a catalytic residue. Gly158 is an NADP(+) binding site. KARI C-terminal knotted domains are found at residues 209-344 (SFVA…TASQ) and 345-484 (FDGK…MKDM). 4 residues coordinate Mg(2+): Asp217, Glu221, Glu389, and Glu393. Ser414 lines the substrate pocket.

Belongs to the ketol-acid reductoisomerase family. Requires Mg(2+) as cofactor.

It catalyses the reaction (2R)-2,3-dihydroxy-3-methylbutanoate + NADP(+) = (2S)-2-acetolactate + NADPH + H(+). It carries out the reaction (2R,3R)-2,3-dihydroxy-3-methylpentanoate + NADP(+) = (S)-2-ethyl-2-hydroxy-3-oxobutanoate + NADPH + H(+). The protein operates within amino-acid biosynthesis; L-isoleucine biosynthesis; L-isoleucine from 2-oxobutanoate: step 2/4. It participates in amino-acid biosynthesis; L-valine biosynthesis; L-valine from pyruvate: step 2/4. In terms of biological role, involved in the biosynthesis of branched-chain amino acids (BCAA). Catalyzes an alkyl-migration followed by a ketol-acid reduction of (S)-2-acetolactate (S2AL) to yield (R)-2,3-dihydroxy-isovalerate. In the isomerase reaction, S2AL is rearranged via a Mg-dependent methyl migration to produce 3-hydroxy-3-methyl-2-ketobutyrate (HMKB). In the reductase reaction, this 2-ketoacid undergoes a metal-dependent reduction by NADPH to yield (R)-2,3-dihydroxy-isovalerate. This Enterobacter sp. (strain 638) protein is Ketol-acid reductoisomerase (NADP(+)).